We begin with the raw amino-acid sequence, 162 residues long: Ribosome maturation factor RimM (162 aa).

Residues 90–161 (EDCYYEADIV…KIIIKPLEVW (72 aa)) enclose the PRC barrel domain.

This sequence belongs to the RimM family. In terms of assembly, binds ribosomal protein uS19.

It localises to the cytoplasm. In terms of biological role, an accessory protein needed during the final step in the assembly of 30S ribosomal subunit, possibly for assembly of the head region. Essential for efficient processing of 16S rRNA. May be needed both before and after RbfA during the maturation of 16S rRNA. It has affinity for free ribosomal 30S subunits but not for 70S ribosomes. This chain is Ribosome maturation factor RimM, found in Clostridium novyi (strain NT).